The chain runs to 255 residues: Urease accessory protein UreD 1 (255 aa).

Belongs to the UreD family. In terms of assembly, ureD, UreF and UreG form a complex that acts as a GTP-hydrolysis-dependent molecular chaperone, activating the urease apoprotein by helping to assemble the nickel containing metallocenter of UreC. The UreE protein probably delivers the nickel.

It is found in the cytoplasm. Functionally, required for maturation of urease via the functional incorporation of the urease nickel metallocenter. In Streptomyces griseus subsp. griseus (strain JCM 4626 / CBS 651.72 / NBRC 13350 / KCC S-0626 / ISP 5235), this protein is Urease accessory protein UreD 1.